The chain runs to 245 residues: Orotidine 5'-phosphate decarboxylase (245 aa).

Substrate-binding positions include Asp-22, Lys-44, 71-80 (DLKFHDIPNT), Thr-131, Arg-192, Gln-201, Gly-221, and Arg-222. Catalysis depends on Lys-73, which acts as the Proton donor.

Belongs to the OMP decarboxylase family. Type 1 subfamily. In terms of assembly, homodimer.

It catalyses the reaction orotidine 5'-phosphate + H(+) = UMP + CO2. The protein operates within pyrimidine metabolism; UMP biosynthesis via de novo pathway; UMP from orotate: step 2/2. Catalyzes the decarboxylation of orotidine 5'-monophosphate (OMP) to uridine 5'-monophosphate (UMP). The protein is Orotidine 5'-phosphate decarboxylase of Escherichia coli (strain K12 / MC4100 / BW2952).